We begin with the raw amino-acid sequence, 121 residues long: MSPLAQKKVAHLKRKTRVRKKIRGTTDRPRLNVYKSARHIYAQIIDDVTGVTLVSASTVQDESDALKYTGNVEAAKCVGAMVAKKALEKNITSVVFDRNGFLYHGRVKALADSARENGLSF.

It belongs to the universal ribosomal protein uL18 family. In terms of assembly, part of the 50S ribosomal subunit; part of the 5S rRNA/L5/L18/L25 subcomplex. Contacts the 5S and 23S rRNAs.

In terms of biological role, this is one of the proteins that bind and probably mediate the attachment of the 5S RNA into the large ribosomal subunit, where it forms part of the central protuberance. This Geobacter metallireducens (strain ATCC 53774 / DSM 7210 / GS-15) protein is Large ribosomal subunit protein uL18.